A 100-amino-acid polypeptide reads, in one-letter code: NADH-quinone oxidoreductase subunit K 2 (100 aa).

3 helical membrane-spanning segments follow: residues 4–24 (LNNY…GVLV), 29–49 (IVIF…FIAF), and 60–80 (IFVF…LALM).

The protein belongs to the complex I subunit 4L family. In terms of assembly, NDH-1 is composed of 14 different subunits. Subunits NuoA, H, J, K, L, M, N constitute the membrane sector of the complex.

It localises to the cell inner membrane. It carries out the reaction a quinone + NADH + 5 H(+)(in) = a quinol + NAD(+) + 4 H(+)(out). Functionally, NDH-1 shuttles electrons from NADH, via FMN and iron-sulfur (Fe-S) centers, to quinones in the respiratory chain. The immediate electron acceptor for the enzyme in this species is believed to be ubiquinone. Couples the redox reaction to proton translocation (for every two electrons transferred, four hydrogen ions are translocated across the cytoplasmic membrane), and thus conserves the redox energy in a proton gradient. In Geotalea uraniireducens (strain Rf4) (Geobacter uraniireducens), this protein is NADH-quinone oxidoreductase subunit K 2.